Reading from the N-terminus, the 182-residue chain is Orotate phosphoribosyltransferase (182 aa).

5-phospho-alpha-D-ribose 1-diphosphate-binding positions include Arg93, Lys94, Lys97, and 119–127; that span reads EDIATTGTS. The orotate site is built by Thr123 and Arg151.

Belongs to the purine/pyrimidine phosphoribosyltransferase family. PyrE subfamily. As to quaternary structure, homodimer. It depends on Mg(2+) as a cofactor.

It carries out the reaction orotidine 5'-phosphate + diphosphate = orotate + 5-phospho-alpha-D-ribose 1-diphosphate. The protein operates within pyrimidine metabolism; UMP biosynthesis via de novo pathway; UMP from orotate: step 1/2. Functionally, catalyzes the transfer of a ribosyl phosphate group from 5-phosphoribose 1-diphosphate to orotate, leading to the formation of orotidine monophosphate (OMP). This chain is Orotate phosphoribosyltransferase, found in Haloquadratum walsbyi (strain DSM 16790 / HBSQ001).